We begin with the raw amino-acid sequence, 338 residues long: Lipoate-protein ligase A (338 aa).

The BPL/LPL catalytic domain maps to 29-216; it reads PATQRVLFLW…AFFAHYGERV (188 aa). Residues R71, 76-79, and K134 contribute to the ATP site; that span reads GAVF. Residue K134 coordinates (R)-lipoate.

It belongs to the LplA family. As to quaternary structure, monomer.

It localises to the cytoplasm. It carries out the reaction L-lysyl-[lipoyl-carrier protein] + (R)-lipoate + ATP = N(6)-[(R)-lipoyl]-L-lysyl-[lipoyl-carrier protein] + AMP + diphosphate + H(+). It functions in the pathway protein modification; protein lipoylation via exogenous pathway; protein N(6)-(lipoyl)lysine from lipoate: step 1/2. Its pathway is protein modification; protein lipoylation via exogenous pathway; protein N(6)-(lipoyl)lysine from lipoate: step 2/2. Catalyzes both the ATP-dependent activation of exogenously supplied lipoate to lipoyl-AMP and the transfer of the activated lipoyl onto the lipoyl domains of lipoate-dependent enzymes. The polypeptide is Lipoate-protein ligase A (Salmonella arizonae (strain ATCC BAA-731 / CDC346-86 / RSK2980)).